The following is a 307-amino-acid chain: Transcription factor DIVARICATA (307 aa).

The 54-residue stretch at 21-74 (RSTTRWTAAENKAFENALAVFDENTPNRWERVAERVPGKTVGDVMRQYKELEDD) folds into the SANT domain. Residues 109–133 (QSYGTGGRKSSSGRPSEQERKKGVP) are disordered. Residues 124-133 (SEQERKKGVP) show a composition bias toward basic and acidic residues. The HTH myb-type domain occupies 126–182 (QERKKGVPWTEEEHKLFLMGLKKYGKGDWRNISRNFVITRTPTQVASHAQKYFIRQL). The segment at residues 154–178 (WRNISRNFVITRTPTQVASHAQKYF) is a DNA-binding region (H-T-H motif). 2 stretches are compositionally biased toward polar residues: residues 196 to 206 (ITTVNLSDNQT) and 222 to 231 (MAQQQTSSTS). The tract at residues 196–231 (ITTVNLSDNQTPSPDNKKPPSSPDHSMAQQQTSSTS) is disordered.

Its subcellular location is the nucleus. Its function is as follows. Involved in the dorsovental asymmetry of flowers. Promotes ventral identity. This is Transcription factor DIVARICATA (DIVARICATA) from Antirrhinum majus (Garden snapdragon).